Consider the following 367-residue polypeptide: MNGSQTLVVKLGTSVLTGGSLRLNRAHIVELVRQCAQQHAAGHRIVIVTSGAIAAGREHLGYPELPATIASKQLLAAVGQSRLIQLWEQLFSIYGIHVGQMLLTRADLEDRERFLNARDTMTALLDNRIVPVINENDAVATAEIKVGDNDNLSALAAILAGADKLLLLTDQQGLYTADPRNNPQAELIREVHGIDDALRAIAGDSVSGLGTGGMGTKLQAADVACRAGIDVVIAAGSKPGVVADVIEGKPVGTRFHALETPLENRKRWIFGAPPAGEITVDDGAVEAMMARGSSLLPKGIREVKGDFSRGEVIRIRNLTGRDLAHGVSRYNSDAMRMIAGHHSQEISEILGYEYGPVAVHRDDMIVS.

Lys-10 serves as a coordination point for ATP. 3 residues coordinate substrate: Ser-50, Asp-137, and Asn-149. Residues 169-170 and 211-217 each bind ATP; these read TD and TGGMGTK. One can recognise a PUA domain in the interval 275 to 353; sequence AGEITVDDGA…QEISEILGYE (79 aa).

It belongs to the glutamate 5-kinase family.

Its subcellular location is the cytoplasm. It catalyses the reaction L-glutamate + ATP = L-glutamyl 5-phosphate + ADP. The protein operates within amino-acid biosynthesis; L-proline biosynthesis; L-glutamate 5-semialdehyde from L-glutamate: step 1/2. Its activity is regulated as follows. Proline-mediated feedback inhibition. Functionally, catalyzes the transfer of a phosphate group to glutamate to form L-glutamate 5-phosphate. This Serratia marcescens protein is Glutamate 5-kinase.